A 355-amino-acid chain; its full sequence is Phosphate acyltransferase (355 aa).

Belongs to the PlsX family. Homodimer. Probably interacts with PlsY.

The protein resides in the cytoplasm. It catalyses the reaction a fatty acyl-[ACP] + phosphate = an acyl phosphate + holo-[ACP]. It functions in the pathway lipid metabolism; phospholipid metabolism. Its function is as follows. Catalyzes the reversible formation of acyl-phosphate (acyl-PO(4)) from acyl-[acyl-carrier-protein] (acyl-ACP). This enzyme utilizes acyl-ACP as fatty acyl donor, but not acyl-CoA. This is Phosphate acyltransferase from Azorhizobium caulinodans (strain ATCC 43989 / DSM 5975 / JCM 20966 / LMG 6465 / NBRC 14845 / NCIMB 13405 / ORS 571).